Reading from the N-terminus, the 273-residue chain is Vitamin B12-binding protein (273 aa).

Positions 1–18 (MMKTLSSLLLLFSVSLQA) are cleaved as a signal peptide. Residues 23–273 (RVISLAPHAT…EHFASIEQKR (251 aa)) enclose the Fe/B12 periplasmic-binding domain. A disulfide bridge links Cys-183 with Cys-263.

This sequence belongs to the BtuF family. As to quaternary structure, the complex is composed of two ATP-binding proteins (BtuD), two transmembrane proteins (BtuC) and a solute-binding protein (BtuF).

It localises to the periplasm. In terms of biological role, part of the ABC transporter complex BtuCDF involved in vitamin B12 import. Binds vitamin B12 and delivers it to the periplasmic surface of BtuC. The polypeptide is Vitamin B12-binding protein (Vibrio vulnificus (strain YJ016)).